The chain runs to 86 residues: Toxin 3FTx-Dis4 (86 aa).

A signal peptide spans 1–19 (MKTLLLSLVMVGFMYLVSG). Disulfide bonds link cysteine 24–cysteine 45, cysteine 38–cysteine 63, and cysteine 79–cysteine 84.

Belongs to the three-finger toxin family. Ancestral subfamily. Expressed by the venom gland.

The protein localises to the secreted. This chain is Toxin 3FTx-Dis4, found in Dispholidus typus (Boomslang).